The primary structure comprises 439 residues: Chromosomal replication initiator protein DnaA (439 aa).

Positions 1–75 are domain I, interacts with DnaA modulators; sequence MESWSRCLER…GIREVVLAIG (75 aa). The tract at residues 75-101 is domain II; the sequence is GSRPKTTELPVPVDTTGRLSSTVPFNG. The domain III, AAA+ region stretch occupies residues 102–319; the sequence is NLDTHYNFDN…GALNTLVARA (218 aa). 4 residues coordinate ATP: G147, G149, K150, and T151. Positions 320 to 439 are domain IV, binds dsDNA; sequence NFTGRAVTIE…WDKLMRKFSE (120 aa).

This sequence belongs to the DnaA family. Oligomerizes as a right-handed, spiral filament on DNA at oriC.

The protein resides in the cytoplasm. Plays an essential role in the initiation and regulation of chromosomal replication. ATP-DnaA binds to the origin of replication (oriC) to initiate formation of the DNA replication initiation complex once per cell cycle. Binds the DnaA box (a 9 base pair repeat at the origin) and separates the double-stranded (ds)DNA. Forms a right-handed helical filament on oriC DNA; dsDNA binds to the exterior of the filament while single-stranded (ss)DNA is stabiized in the filament's interior. The ATP-DnaA-oriC complex binds and stabilizes one strand of the AT-rich DNA unwinding element (DUE), permitting loading of DNA polymerase. After initiation quickly degrades to an ADP-DnaA complex that is not apt for DNA replication. Binds acidic phospholipids. This Xylella fastidiosa (strain 9a5c) protein is Chromosomal replication initiator protein DnaA.